Here is a 426-residue protein sequence, read N- to C-terminus: Histidine--tRNA ligase (426 aa).

The protein belongs to the class-II aminoacyl-tRNA synthetase family.

The protein localises to the cytoplasm. The catalysed reaction is tRNA(His) + L-histidine + ATP = L-histidyl-tRNA(His) + AMP + diphosphate + H(+). The chain is Histidine--tRNA ligase from Saccharolobus islandicus (strain M.16.27) (Sulfolobus islandicus).